We begin with the raw amino-acid sequence, 450 residues long: Equilibrative nucleotide transporter 1 (450 aa).

The next 11 membrane-spanning stretches (helical) occupy residues 63–83, 101–121, 133–153, 168–188, 196–216, 234–254, 300–320, 334–354, 361–381, 394–414, and 430–450; these read FAYI…NAFI, IFAV…VVFY, LGLL…LVYV, AAVA…IGVA, MQAV…LRIL, LYFA…NVAH, HGFG…GYIT, ILLI…TAVF, IAVG…GCLH, ILTC…MILA, and TVMF…FWVI.

Belongs to the SLC29A/ENT transporter (TC 2.A.57) family. In terms of tissue distribution, in young seedlings, expressed in root elongation zone, root cortex, root-hair, at the transition to the shoot and cotyledons. Expressed in hydathodes of fully developed leaves and pollen.

It localises to the vacuole membrane. Its function is as follows. Nucleoside transporter involved in adenosine transport and required for nucleotide metabolism which influences growth and pollen germination. Has high affinity for adenosine when expressed in a heterologous system (yeast). The chain is Equilibrative nucleotide transporter 1 (ENT1) from Arabidopsis thaliana (Mouse-ear cress).